Consider the following 452-residue polypeptide: Transcription factor ETV6 (452 aa).

Residues 1 to 10 show a composition bias toward polar residues; that stretch reads MSETPAQCSI. The interval 1-30 is disordered; sequence MSETPAQCSIKQERISYTPPESPVPSYASS. Lysine 11 carries the post-translational modification N6-acetyllysine; alternate. Lysine 11 is covalently cross-linked (Glycyl lysine isopeptide (Lys-Gly) (interchain with G-Cter in SUMO2); alternate). Threonine 18 is subject to Phosphothreonine. Phosphoserine is present on serine 22. One can recognise a PNT domain in the interval 40 to 124; it reads ALRMEEDSIR…ELLQHILKQR (85 aa). The disordered stretch occupies residues 158–262; it reads VQRTPRPSVD…PKPSSPRQES (105 aa). 2 positions are modified to phosphoserine: serine 213 and serine 238. Residues 230–250 are compositionally biased toward polar residues; sequence QESYPLSVSPMENNHCPASSE. Serine 257 carries the phosphoserine; by MAPK14 modification. Residue lysine 288 forms a Glycyl lysine isopeptide (Lys-Gly) (interchain with G-Cter in SUMO2) linkage. N6-acetyllysine; alternate is present on lysine 302. A Glycyl lysine isopeptide (Lys-Gly) (interchain with G-Cter in SUMO2); alternate cross-link involves residue lysine 302. Serine 323 is subject to Phosphoserine. A DNA-binding region (ETS) is located at residues 339 to 420; it reads RLLWDYVYQL…PGQRLLFRFM (82 aa). Glycyl lysine isopeptide (Lys-Gly) (interchain with G-Cter in SUMO2) cross-links involve residues lysine 403 and lysine 421.

This sequence belongs to the ETS family. As to quaternary structure, can form homodimers or heterodimers with TEL2 or FLI1. Interacts with L3MBTL1 and HDAC9. In terms of processing, phosphorylation of Ser-257 by MAPK14 (p38) inhibits ETV6 transcriptional repression. Ubiquitous.

It is found in the nucleus. Its function is as follows. Transcriptional repressor; binds to the DNA sequence 5'-CCGGAAGT-3'. Plays a role in hematopoiesis and malignant transformation. The sequence is that of Transcription factor ETV6 (ETV6) from Homo sapiens (Human).